The sequence spans 263 residues: Lens fiber major intrinsic protein (263 aa).

The Cytoplasmic portion of the chain corresponds to 1–9; that stretch reads MWELRSASF. Residues 10–29 form a helical membrane-spanning segment; sequence WRAIFAEFFATLFYVFFGLG. Residues 30 to 41 are Extracellular-facing; the sequence is SSLRWAPGPLHV. Residues 42 to 59 traverse the membrane as a helical segment; that stretch reads LQVAMAFGLALATLVQSV. The Cytoplasmic segment spans residues 60–61; the sequence is GH. The segment at residues 62 to 77 is an intramembrane region (discontinuously helical); sequence ISGAHVNPAVTFAFLV. The NPA 1 motif lies at 68 to 70; sequence NPA. Over 78-82 the chain is Cytoplasmic; the sequence is GSQMS. Residues 83–106 form a helical membrane-spanning segment; sequence LLRAFCYMAAQLLGAVAGAAVLYS. Residues 107–127 lie on the Extracellular side of the membrane; that stretch reads VTPPAVRGNLALNTLHPAVSV. A helical membrane pass occupies residues 128 to 148; that stretch reads GQATTVEIFLTLQFVLCIFAT. Residues 149–156 lie on the Cytoplasmic side of the membrane; sequence YDERRNGQ. A helical membrane pass occupies residues 157-175; the sequence is LGSVALAVGFSLALGHLFG. Residues 176-178 are Extracellular-facing; that stretch reads MYY. Positions 179–193 form an intramembrane region, discontinuously helical; it reads TGAGMNPARSFAPAI. Positions 184–186 match the NPA 2 motif; that stretch reads NPA. At 194 to 200 the chain is on the extracellular side; the sequence is LTGNFTN. The helical transmembrane segment at 201–222 threads the bilayer; the sequence is HWVYWVGPIIGGGLGSLLYDFL. At 223–263 the chain is on the cytoplasmic side; that stretch reads LFPRLKSISERLSVLKGAKPDVSNGQPEVTGEPVELNTQAL. The interaction with CALM stretch occupies residues 227-237; that stretch reads LKSISERLSVL. Residues Ser235 and Ser245 each carry the phosphoserine modification. Asn246 and Asn259 each carry deamidated asparagine; by deterioration.

It belongs to the MIP/aquaporin (TC 1.A.8) family. In terms of assembly, homotetramer; each monomer provides an independent water pore. Two homotetramers on opposing membranes can dimerize, forming a cell-cell junction. Interacts with CALM; the calcium-calmodulin/CALM complex interacts with the cytoplasmic domains of two aquaporins, leading to channel closure. Interacts with BFSP1 (via C-terminus); prevents calcium-dependent inhibition of the water channel activity. In terms of processing, subject to partial proteolytic cleavage in the eye lens core. Partial proteolysis promotes interactions between tetramers from adjoining membranes. Post-translationally, fatty acylated at Met-1 and Lys-238. The acyl modifications, in decreasing order of ion abundance, are: oleoyl (C18:1) &gt; palmitoyl (C16:0) &gt; stearoyl (C18:0) &gt; eicosenoyl (C20:1) &gt; dihomo-gamma-linolenoyl (C20:3) &gt; palmitoleoyl (C16:1) &gt; eicosadienoyl (C20:2). As to expression, expressed in the cortex and nucleus of the retina lens (at protein level). Major component of lens fiber gap junctions.

The protein resides in the cell membrane. It is found in the cell junction. It catalyses the reaction H2O(in) = H2O(out). Its activity is regulated as follows. The water channel activity is inhibited by calcium through calmodulin/CALM. Its function is as follows. Aquaporins form homotetrameric transmembrane channels, with each monomer independently mediating water transport across the plasma membrane along its osmotic gradient. Specifically expressed in lens fiber cells, this aquaporin is crucial for maintaining lens water homeostasis and transparency. Beyond water permeability, it also acts as a cell-to-cell adhesion molecule, forming thin junctions between lens fiber cells that are essential for maintaining the ordered structure and transparency of the lens. This chain is Lens fiber major intrinsic protein, found in Homo sapiens (Human).